The primary structure comprises 830 residues: MTFDTNDDSIAKNSLAPYNQETEQQQEEGAMKINAGTEDDVQPQEIPSSIPILPLRDVVVFNYMIVPLFVGRERSIQAVESATTHGQHIFLCAQKDSQIENPTEEDLYSVGTVALILRLLKMPDGRLKALVQGISRARCLTIHNEDGYLTATVELLQEPQPTVKPTEQEALLRYAREQCEKILALRGIPTGEIMGVLSNVNEPGRLADLIAANLRLKTEEAQEILQCLEPIDRLHLVITHLTHEAEVATMQVKIQTSAREGMDKAQKDYFLREQLKAIRKELGDAIDADEEIEEVSSALNKAGLPAEVRKEVDKQLRRLSTMHADSAEAGVIRTYLDWIAELPWKKTSKDQLDIHKAKTILNEDHYGLVKIKDRILEYLSVRKLNPKSKGPILCFAGPPGVGKTSLGRSIAKSLGRKFQRISLGGMHDEAEIRGHRRTYIGAMPGRLIQAMKQAGTKNPVILLDEIDKLGNDFRGDPSSALLEALDPEQNHNFSDHYLNVPFDLSKVLFLCTANHLEHIPAALKDRLEIISLPGYTQQEKLAIARKYILPKQLKENGLKENELIISDTCLEKIIREYTREAGLRNMEREIGSLCRKVARKKAEGKKPPFRITTNQIEKFLGIPRFIDDDTEKTLPPGVALGLAWTPAGGEILYIEVSTVKGKGNLLLTGQLGDVMKESAQAALSYARSKASSLNISPDFAKSMDIHIHIPAGATPKDGPSAGVTLTTALISALTGKSVRGDLCMTGEITLRGRVLPVGGIKEKVLAGVARGLGHVIIPTKNTKDLEEIPQELKKKIKIHTVSHIDEVLPLAFSETIPVVTKKKQTKQPTS.

Positions 1 to 28 are disordered; it reads MTFDTNDDSIAKNSLAPYNQETEQQQEE. One can recognise a Lon N-terminal domain in the interval 50–245; the sequence is IPILPLRDVV…LVITHLTHEA (196 aa). Position 397–404 (397–404) interacts with ATP; the sequence is GPPGVGKT. Residues 633–814 enclose the Lon proteolytic domain; it reads TLPPGVALGL…DEVLPLAFSE (182 aa). Catalysis depends on residues Ser-720 and Lys-763.

Belongs to the peptidase S16 family. As to quaternary structure, homohexamer. Organized in a ring with a central cavity.

The protein resides in the cytoplasm. The enzyme catalyses Hydrolysis of proteins in presence of ATP.. Functionally, ATP-dependent serine protease that mediates the selective degradation of mutant and abnormal proteins as well as certain short-lived regulatory proteins. Required for cellular homeostasis and for survival from DNA damage and developmental changes induced by stress. Degrades polypeptides processively to yield small peptide fragments that are 5 to 10 amino acids long. Binds to DNA in a double-stranded, site-specific manner. This chain is Lon protease, found in Lawsonia intracellularis (strain PHE/MN1-00).